We begin with the raw amino-acid sequence, 322 residues long: Pyrroline-5-carboxylate reductase (322 aa).

2 helical membrane passes run 9-29 and 117-137; these read YPNV…VGLL and ILIS…LHFW. Positions 302-322 are disordered; sequence LSQSAGSHGEDNTTDSKTSRA. N-linked (GlcNAc...) asparagine glycosylation occurs at Asn313.

It belongs to the pyrroline-5-carboxylate reductase family.

The protein localises to the membrane. It carries out the reaction L-proline + NADP(+) = (S)-1-pyrroline-5-carboxylate + NADPH + 2 H(+). It catalyses the reaction L-proline + NAD(+) = (S)-1-pyrroline-5-carboxylate + NADH + 2 H(+). Its pathway is alkaloid biosynthesis. Its function is as follows. Pyrroline-5-carboxylate reductase; part of the gene cluster that mediates the biosynthesis of paraherquamide, a fungal indole alkaloid that belongs to a family of natural products containing a characteristic bicyclo[2.2.2]diazaoctane core. The first steps in the biosynthesis of paraherquamide is the production of the beta-methyl-proline precursor from L-isoleucine. They require oxidation of a terminally hydroxylated L-isoleucine to the corresponding aldehyde by enzymes which have still to be identified. Spontaneous cyclization and dehydration would yield the 4-methyl pyrolline-5-carboxylic acid, which is then reduced by the pyrroline-5-carboxylate reductase phqD leading to the beta-methyl-proline precursor. The next step of paraherquamide biosynthesis involves coupling of beta-methyl-proline and L-tryptophan by the bimodular NRPS phqB, to produce a monooxopiperazine intermediate. The reductase (R) domain of phqB utilizes NADPH for hydride transfer to reduce the thioester bond of the T domain-tethered linear dipeptide to a hemithioaminal intermediate, which spontaneously cleaves the C-S bond to release the aldehyde product. This compound undergoes spontaneous cyclization and dehydration to give a dienamine which is reverse prenylated at C-2 by the reverse prenyltransferase phqJ. The other prenyltransferase present in the cluster, phqI may be a redundant gene in the pathway. During biosynthetic assembly, the key step to produce the polycyclic core is catalyzed by the bifunctional reductase and intramolecular [4+2] Diels-Alderase, phqE, resulting in formation of the [2.2.2] diazaoctane intermediate preparaherquamide. Following formation of preparaherquamide, an indole 2,3-epoxidation-initiated pinacol-like rearrangement is catalyzed by the phqK FAD-dependent monooxygenase. The prenyltransferase phqA, the cytochrome P450 monooxygenase phqL, and the FAD-linked oxidoreductase phqH (or the cytochrome P450 monooxygenase phqM), are proposed to be involved in the formation of the pyran ring. The FAD-dependent monooxygenase phqK is likely responsible for generation of the spiro-oxindole, and the N-methylation is likely mediated by the phqN methyltransferase leading to the isolable natural product paraherquamide F. However, the order of these biosynthetic steps has still to be determined. In late-stage paraherquamide biosynthesis, the third P450 monooxygenase, phqO, is probably responsible for the C-14 hydroxylation, transforming paraherquamide F to paraherquamide G, and paraherquamide E to the final product paraherquamide A. The expansion from the 6-membered ring pyran (in paraherquamides F and G) to the 7-membered dioxepin ring (in paraherquamides A and E) represents a poorly understood but intriguing process that probably involves the 2-oxoglutarate-dependent dioxygenase phqC. Finally, the remaining members of the paraherquamide cluster, including phqI as well as phqM (or phqH), do not have a clearly prescribed role and appear to be redundant. The chain is Pyrroline-5-carboxylate reductase from Penicillium fellutanum.